A 262-amino-acid polypeptide reads, in one-letter code: Type II restriction enzyme HinfI (262 aa).

It catalyses the reaction Endonucleolytic cleavage of DNA to give specific double-stranded fragments with terminal 5'-phosphates.. Functionally, a P subtype restriction enzyme that recognizes the double-stranded sequence 5'-GANTC-3' and cleaves after G-1. In Haemophilus influenzae, this protein is Type II restriction enzyme HinfI (hinfIR).